A 508-amino-acid chain; its full sequence is Octopamine receptor beta-1R (508 aa).

At 1-111 (MTLLQRLQAM…SHLALVFVKC (111 aa)) the chain is on the extracellular side. Residues 112 to 132 (FIIGFIILAAILGNMLVIVSV) form a helical membrane-spanning segment. Residues 133-139 (MRHRKLR) are Cytoplasmic-facing. A helical membrane pass occupies residues 140–160 (IITNYFVVSLAVADMLVALCA). The Extracellular portion of the chain corresponds to 161–186 (MTFNASVMISGKWMFGSVMCDMWNSF). A glycan (N-linked (GlcNAc...) asparagine) is linked at Asn-164. The chain crosses the membrane as a helical span at residues 187–209 (DVYFSTASIMHLCCISVDRYYAI). The Cytoplasmic portion of the chain corresponds to 210–223 (VQPLDYPLIMTQRR). The chain crosses the membrane as a helical span at residues 224 to 244 (VFIMLLMVWLSPALLSFLPIC). The Extracellular segment spans residues 245-270 (SGWYTTTENYKYLKSNPHICEFKVNK). Residues 271 to 291 (AYAIVSSSMSFWIPGIVMLSM) form a helical membrane-spanning segment. Residues 292-351 (YYRIYQEADRQERLVYRSKVAALLLEKHLQISQIPKPRPSIQVEQSTISTMRRERKAART) lie on the Cytoplasmic side of the membrane. Residues 352–372 (LGIIMSAFLICWLPFFLWYIV) traverse the membrane as a helical segment. Over 373–383 (SSLCDSCITPR) the chain is Extracellular. A helical membrane pass occupies residues 384-404 (LLVGILFWIGYFNSALNPIIY). The Cytoplasmic portion of the chain corresponds to 405-508 (AYFNRDFRAA…MQQLHPLYTN (104 aa)). The disordered stretch occupies residues 440–464 (RDLEFGGPSRRGTNGAQRTGSGSAE). Residues 450 to 461 (RGTNGAQRTGSG) are compositionally biased toward polar residues.

It belongs to the G-protein coupled receptor 1 family. In the adult, expressed in the superior protocerebrum and the optic lobe medulla of the central nervous system, nurse cells of egg chambers in the ovary at oogenic stages 1-10, and spermatogonia and spermatocytes in the testis. Expressed in embryonic and larval ventral nerve cord and brain lobe, and the larval imaginal disk and larval salivary gland. Also expressed in larval synaptic boutons and retinal cells in the optic disk.

Its subcellular location is the cell membrane. In terms of biological role, autoreceptor for octopamine, which is a neurotransmitter, neurohormone, and neuromodulator in invertebrates. Negatively regulates synaptic growth by activating the inhibitory G protein Galphao and limiting cAMP production. Antagonizes the action of Octbeta2R which stimulates synaptic growth. The protein is Octopamine receptor beta-1R of Drosophila melanogaster (Fruit fly).